The primary structure comprises 318 residues: tRNA-dihydrouridine(16) synthase (318 aa).

FMN-binding positions include 7 to 9 (PME) and glutamine 68. Cysteine 98 serves as the catalytic Proton donor. FMN is bound by residues lysine 139, 200 to 202 (NGE), and 224 to 225 (CR).

The protein belongs to the Dus family. DusC subfamily. It depends on FMN as a cofactor.

It carries out the reaction 5,6-dihydrouridine(16) in tRNA + NADP(+) = uridine(16) in tRNA + NADPH + H(+). The catalysed reaction is 5,6-dihydrouridine(16) in tRNA + NAD(+) = uridine(16) in tRNA + NADH + H(+). Its function is as follows. Catalyzes the synthesis of 5,6-dihydrouridine (D), a modified base found in the D-loop of most tRNAs, via the reduction of the C5-C6 double bond in target uridines. Specifically modifies U16 in tRNAs. The chain is tRNA-dihydrouridine(16) synthase from Vibrio vulnificus (strain CMCP6).